The following is a 1775-amino-acid chain: Atrochrysone carboxylic acid synthase (1775 aa).

One can recognise a Starter acyltransferase (SAT) domain in the interval 35-262 (LRRLQALSKD…YAKWASLPIF (228 aa)). One can recognise a Ketosynthase family 3 (KS3) domain in the interval 400-833 (DSKIAIVGMS…GGNTTMLLEE (434 aa)). Residues C573, H708, and H750 each act as for beta-ketoacyl synthase activity in the active site. One can recognise a Malonyl-CoA:ACP transacylase (MAT) domain in the interval 934–1244 (FAFTGQGAFY…ENNWNTLADS (311 aa)). Residues 1313-1631 (TSSIHQVLQE…RSLLPTFFSP (319 aa)) form a product template (PT) domain region. The N-terminal hotdog fold stretch occupies residues 1317–1451 (HQVLQEDVTG…SAVVEYGDAN (135 aa)). The region spanning 1317-1626 (HQVLQEDVTG…FRRFPRSLLP (310 aa)) is the PKS/mFAS DH domain. The active-site Proton acceptor; for dehydratase activity is H1349. Residues 1480-1626 (AAVLPRNMAY…FRRFPRSLLP (147 aa)) form a C-terminal hotdog fold region. D1537 acts as the Proton donor; for dehydratase activity in catalysis. Residues 1671–1697 (TAAPVPAPAPVPAKRAEPAPAAAQAAA) form a disordered region. The span at 1688–1697 (PAPAAAQAAA) shows a compositional bias: low complexity. The 78-residue stretch at 1697–1774 (ATQNPTITGA…ELKTYIEETF (78 aa)) folds into the Carrier domain. Residue S1734 is modified to O-(pantetheine 4'-phosphoryl)serine.

It catalyses the reaction holo-[ACP] + 8 malonyl-CoA + 8 H(+) = atrochrysone carboxyl-[ACP] + 8 CO2 + 8 CoA + 2 H2O. It functions in the pathway secondary metabolite biosynthesis. Non-reducing polyketide synthase; part of the gene cluster that mediates the biosynthesis of physcion, a natural anthraquinone fungicide that can prevent plant fungal infections. The pathway begins with the polyketide synthase AcPKS that condenses 8 malonyl-CoA units to synthesize atrochrysone thioester which is released from the synthase by the atrochrysone carboxyl ACP thioesterase AcTE that breaks the thioester bond and leads to free atrochrysone carboxylic acid. Spontaneous decarboxylation of atrochrysone carboxylic acid leads to the formation of atrochrysone. Then, atrochrysone undergoes spontaneous dehydration and oxidation, giving the products emodin anthrone and emodin. The O-methyltransferase AcOMT then methylates the C-6 hydroxyl of emodin to form physcion. The polypeptide is Atrochrysone carboxylic acid synthase (Aspergillus chevalieri (Eurotium chevalieri)).